The chain runs to 389 residues: Sulfate adenylyltransferase (389 aa).

Belongs to the sulfate adenylyltransferase family.

The enzyme catalyses sulfate + ATP + H(+) = adenosine 5'-phosphosulfate + diphosphate. The protein operates within sulfur metabolism; hydrogen sulfide biosynthesis; sulfite from sulfate: step 1/3. The polypeptide is Sulfate adenylyltransferase (Hyperthermus butylicus (strain DSM 5456 / JCM 9403 / PLM1-5)).